Here is a 334-residue protein sequence, read N- to C-terminus: Protein-methionine-sulfoxide reductase catalytic subunit MsrP (334 aa).

The segment at residues 1–44 (MKKNQFLKESDVTAESVFFMTRRQVLKALGISAAALSLPHAAHA) is a signal peptide (tat-type signal). Mo-molybdopterin-binding positions include asparagine 88, 91–92 (YE), cysteine 146, threonine 181, asparagine 233, arginine 238, and 249–251 (GIK).

It belongs to the MsrP family. As to quaternary structure, heterodimer of a catalytic subunit (MsrP) and a heme-binding subunit (MsrQ). It depends on Mo-molybdopterin as a cofactor. In terms of processing, predicted to be exported by the Tat system. The position of the signal peptide cleavage has not been experimentally proven.

The protein localises to the periplasm. It carries out the reaction L-methionyl-[protein] + a quinone + H2O = L-methionyl-(S)-S-oxide-[protein] + a quinol. The catalysed reaction is L-methionyl-[protein] + a quinone + H2O = L-methionyl-(R)-S-oxide-[protein] + a quinol. Part of the MsrPQ system that repairs oxidized periplasmic proteins containing methionine sulfoxide residues (Met-O), using respiratory chain electrons. Thus protects these proteins from oxidative-stress damage caused by reactive species of oxygen and chlorine generated by the host defense mechanisms. MsrPQ is essential for the maintenance of envelope integrity under bleach stress, rescuing a wide series of structurally unrelated periplasmic proteins from methionine oxidation, including the primary periplasmic chaperone SurA and the lipoprotein Pal. The catalytic subunit MsrP is non-stereospecific, being able to reduce both (R-) and (S-) diastereoisomers of methionine sulfoxide. This chain is Protein-methionine-sulfoxide reductase catalytic subunit MsrP, found in Escherichia coli (strain 55989 / EAEC).